Reading from the N-terminus, the 315-residue chain is 4-hydroxy-3-methylbut-2-enyl diphosphate reductase (315 aa).

Residue cysteine 12 participates in [4Fe-4S] cluster binding. Residues histidine 41 and histidine 74 each contribute to the (2E)-4-hydroxy-3-methylbut-2-enyl diphosphate site. Histidine 41 and histidine 74 together coordinate dimethylallyl diphosphate. Residues histidine 41 and histidine 74 each coordinate isopentenyl diphosphate. Residue cysteine 96 coordinates [4Fe-4S] cluster. Histidine 124 provides a ligand contact to (2E)-4-hydroxy-3-methylbut-2-enyl diphosphate. Histidine 124 is a dimethylallyl diphosphate binding site. Histidine 124 lines the isopentenyl diphosphate pocket. Glutamate 126 functions as the Proton donor in the catalytic mechanism. (2E)-4-hydroxy-3-methylbut-2-enyl diphosphate is bound at residue threonine 168. Residue cysteine 198 participates in [4Fe-4S] cluster binding. 4 residues coordinate (2E)-4-hydroxy-3-methylbut-2-enyl diphosphate: serine 226, serine 227, asparagine 228, and serine 270. Dimethylallyl diphosphate contacts are provided by serine 226, serine 227, asparagine 228, and serine 270. Residues serine 226, serine 227, asparagine 228, and serine 270 each contribute to the isopentenyl diphosphate site.

This sequence belongs to the IspH family. [4Fe-4S] cluster is required as a cofactor.

It catalyses the reaction isopentenyl diphosphate + 2 oxidized [2Fe-2S]-[ferredoxin] + H2O = (2E)-4-hydroxy-3-methylbut-2-enyl diphosphate + 2 reduced [2Fe-2S]-[ferredoxin] + 2 H(+). It carries out the reaction dimethylallyl diphosphate + 2 oxidized [2Fe-2S]-[ferredoxin] + H2O = (2E)-4-hydroxy-3-methylbut-2-enyl diphosphate + 2 reduced [2Fe-2S]-[ferredoxin] + 2 H(+). Its pathway is isoprenoid biosynthesis; dimethylallyl diphosphate biosynthesis; dimethylallyl diphosphate from (2E)-4-hydroxy-3-methylbutenyl diphosphate: step 1/1. It functions in the pathway isoprenoid biosynthesis; isopentenyl diphosphate biosynthesis via DXP pathway; isopentenyl diphosphate from 1-deoxy-D-xylulose 5-phosphate: step 6/6. Functionally, catalyzes the conversion of 1-hydroxy-2-methyl-2-(E)-butenyl 4-diphosphate (HMBPP) into a mixture of isopentenyl diphosphate (IPP) and dimethylallyl diphosphate (DMAPP). Acts in the terminal step of the DOXP/MEP pathway for isoprenoid precursor biosynthesis. This is 4-hydroxy-3-methylbut-2-enyl diphosphate reductase from Pseudomonas savastanoi pv. phaseolicola (strain 1448A / Race 6) (Pseudomonas syringae pv. phaseolicola (strain 1448A / Race 6)).